A 242-amino-acid chain; its full sequence is 1-(5-phosphoribosyl)-5-[(5-phosphoribosylamino)methylideneamino] imidazole-4-carboxamide isomerase (242 aa).

The active-site Proton acceptor is Asp10. Catalysis depends on Asp131, which acts as the Proton donor.

It belongs to the HisA/HisF family.

The protein resides in the cytoplasm. The enzyme catalyses 1-(5-phospho-beta-D-ribosyl)-5-[(5-phospho-beta-D-ribosylamino)methylideneamino]imidazole-4-carboxamide = 5-[(5-phospho-1-deoxy-D-ribulos-1-ylimino)methylamino]-1-(5-phospho-beta-D-ribosyl)imidazole-4-carboxamide. Its pathway is amino-acid biosynthesis; L-histidine biosynthesis; L-histidine from 5-phospho-alpha-D-ribose 1-diphosphate: step 4/9. This is 1-(5-phosphoribosyl)-5-[(5-phosphoribosylamino)methylideneamino] imidazole-4-carboxamide isomerase from Granulibacter bethesdensis (strain ATCC BAA-1260 / CGDNIH1).